Reading from the N-terminus, the 198-residue chain is Ribosome maturation factor RimP (198 aa).

Belongs to the RimP family.

It is found in the cytoplasm. Its function is as follows. Required for maturation of 30S ribosomal subunits. The polypeptide is Ribosome maturation factor RimP (Rhizobium rhizogenes (strain K84 / ATCC BAA-868) (Agrobacterium radiobacter)).